A 986-amino-acid polypeptide reads, in one-letter code: MAGIVHGILFCGLFGLCWAVTGSRIYPASEVTLLDSRSVQGELGWIASPLEGGWEEVSIMDEKNTPIRTYQVCNVMESSQNNWLRTDWIPRSGAQRVYVEIKFTLRDCNSLPGVMGTCKETFNLYYYESNNDKERFIRETQYVKIDTIAADESFTQVDIGDRIMKLNTEVRDVGPLSKKGFYLAFQDVGACIALVSVRVFYKKCPLTVRNLAQFPDTITGSDTSSLVEVRGSCVDNSEEKDVPKMYCGADGEWLVPIGNCLCNAGFEEHNGGCQACKVGYYKALSTDAACSKCPPHSYALREGSTSCTCDRGYFRADTDPASMPCTRPPSAPQNLISNVNETSVNLEWSPPQNSGGRPDVSYNLVCKRCGSDLTRCRPCGSGVHYSPQQNGLKTTKVSITDLQAHTNYTFEVWSINGVSKQNPGQDQAVSVTVTTNQAAPSTVTQIQPKDITRHSVSLTWPEPERPNGVILEYEVKYYEKDQNERTYRIVKTTSRSADIKGLNPLTAYVFHVRARTAAGYGEFSGPFEFTTNTVPSPMIGEGASPTVLLVSVAGSIVLVVILIAAFVISRRRSKYSKAKQEADEEKHLNQGVKTYVDPFTYEDPNQAVREFAKEIDASCIKIEKVIGVGEFGEVCSGRLKVPGKREIYVAIKTLKAGYTDKQRRDFLSEASIMGQFDHPNIIHLEGVVTKCKPVMIITEYMENGSLDAFLRKNDGRFTVIQLVGILRGIGSGMKYLSDMSYVHRDLAARNILVNSNLVCKVSDFGMSRVLEDDPEAAYTTRGGKIPIRWTAPEAIAYRKFTSASDVWSYGIVMWEVMSYGERPYWDMSNQDVIKAIEEGYRLPPPMDCPIALHQLMLDCWQKERSDRPKFGQIVSMLDKLIRNPNSLKRTGLDNSSRTNTTLLDPSSPEWSQVASVLDWLQAIKMERYKDNFTAAGYTSLEAVVHVNQDDLTRIGISSPSHQNKILSSVQGMRTQMQQIQGRMVPV.

A signal peptide spans 1–20 (MAGIVHGILFCGLFGLCWAV). Residues 21 to 547 (TGSRIYPASE…MIGEGASPTV (527 aa)) lie on the Extracellular side of the membrane. The Eph LBD domain maps to 30-209 (EVTLLDSRSV…FYKKCPLTVR (180 aa)). Fibronectin type-III domains are found at residues 328 to 438 (PPSA…TNQA) and 439 to 536 (APST…TVPS). 2 N-linked (GlcNAc...) asparagine glycosylation sites follow: Asn340 and Asn407. The chain crosses the membrane as a helical span at residues 548–569 (LLVSVAGSIVLVVILIAAFVIS). Residues 570 to 986 (RRRSKYSKAK…QQIQGRMVPV (417 aa)) are Cytoplasmic-facing. Residues Tyr595 and Tyr601 each carry the phosphotyrosine; by autocatalysis modification. The Protein kinase domain maps to 620–881 (IKIEKVIGVG…QIVSMLDKLI (262 aa)). ATP is bound by residues 626-634 (IGVGEFGEV) and Lys652. Asp745 acts as the Proton acceptor in catalysis. Phosphotyrosine; by autocatalysis is present on residues Tyr778 and Tyr928. Positions 911–975 (SQVASVLDWL…LSSVQGMRTQ (65 aa)) constitute an SAM domain. The short motif at 984–986 (VPV) is the PDZ-binding element.

This sequence belongs to the protein kinase superfamily. Tyr protein kinase family. Ephrin receptor subfamily.

It localises to the cell membrane. It is found in the early endosome. It catalyses the reaction L-tyrosyl-[protein] + ATP = O-phospho-L-tyrosyl-[protein] + ADP + H(+). In terms of biological role, receptor tyrosine kinase which binds membrane-bound ephrin family ligands residing on adjacent cells, leading to contact-dependent bidirectional signaling into neighboring cells. The signaling pathway downstream of the receptor is referred to as forward signaling while the signaling pathway downstream of the ephrin ligand is referred to as reverse signaling. Highly promiscuous, it has the unique property among Eph receptors to bind and to be physiologically activated by both GPI-anchored ephrin-A and transmembrane ephrin-B ligands including EFNA1 and EFNB3. Upon activation by ephrin ligands, modulates cell morphology and integrin-dependent cell adhesion through regulation of the Rac, Rap and Rho GTPases activity. Plays an important role in the development of the nervous system controlling different steps of axonal guidance including the establishment of the corticospinal projections. The protein is Ephrin type-A receptor 4-A (epha4-a) of Xenopus laevis (African clawed frog).